A 560-amino-acid polypeptide reads, in one-letter code: Zorya protein ZorC (560 aa).

Its function is as follows. Component of antiviral defense system Zorya type I, composed of ZorA, ZorB, ZorC and ZorD. Expression of Zorya type I in E.coli (strain MG1655) confers 10,000-fold resistance to phage SECphi27, 100-fold resistance to lambda, and 10-fold resistance to T7. While most T7 infected Zorya-containing cells undergo abortive infection, a minority produce viable phage progeny. These eventually accumulate to a high multiplicity of infection, leading to culture collapse by 2 hours after initial infection. ZorA and ZorB probably assemble in the cell inner membrane and exert their effect there. This is Zorya protein ZorC from Escherichia coli O139:H28 (strain E24377A / ETEC).